A 291-amino-acid polypeptide reads, in one-letter code: 4-diphosphocytidyl-2-C-methyl-D-erythritol kinase (291 aa).

K12 is an active-site residue. 95-105 lines the ATP pocket; that stretch reads PDGGGLGGGSS. Residue D137 is part of the active site.

It belongs to the GHMP kinase family. IspE subfamily.

The enzyme catalyses 4-CDP-2-C-methyl-D-erythritol + ATP = 4-CDP-2-C-methyl-D-erythritol 2-phosphate + ADP + H(+). The protein operates within isoprenoid biosynthesis; isopentenyl diphosphate biosynthesis via DXP pathway; isopentenyl diphosphate from 1-deoxy-D-xylulose 5-phosphate: step 3/6. Its function is as follows. Catalyzes the phosphorylation of the position 2 hydroxy group of 4-diphosphocytidyl-2C-methyl-D-erythritol. This Alkalilimnicola ehrlichii (strain ATCC BAA-1101 / DSM 17681 / MLHE-1) protein is 4-diphosphocytidyl-2-C-methyl-D-erythritol kinase.